A 159-amino-acid polypeptide reads, in one-letter code: Protein B1 (159 aa).

Over residues 1–15 (MQKNMKTKKTKKRGR) the composition is skewed to basic residues. 2 disordered regions span residues 1-100 (MQKN…RTRE) and 133-159 (PGHG…DPPR). A compositionally biased stretch (basic and acidic residues) spans 16 to 31 (KEGNTPETERRMEPAR). The span at 85–96 (RGRHIHTRGART) shows a compositional bias: basic residues.

The protein is Protein B1 (B1) of Human herpesvirus 6B (strain Z29) (HHV-6 variant B).